The chain runs to 321 residues: Cathepsin O (321 aa).

The N-terminal stretch at 1–23 (MDVRALPWLPWLLWLLCRGGGDA) is a signal peptide. A propeptide spans 24–107 (DSRAPFTPTW…EVHMSIPNVS (84 aa)) (activation peptide). N-linked (GlcNAc...) asparagine glycans are attached at residues asparagine 62 and asparagine 105. 3 disulfides stabilise this stretch: cysteine 129–cysteine 170, cysteine 163–cysteine 204, and cysteine 262–cysteine 310. Cysteine 132 is a catalytic residue. Residues histidine 269 and asparagine 289 contribute to the active site.

Belongs to the peptidase C1 family. In terms of tissue distribution, expressed in all tissues examined. High levels seen in the ovary, kidney and placenta while low levels seen in thymus and skeletal muscle.

Its subcellular location is the lysosome. It carries out the reaction The recombinant human enzyme hydrolyzes synthetic endopeptidase substrates including Z-Phe-Arg-NHMec and Z-Arg-Arg-NHMec.. Its function is as follows. Proteolytic enzyme possibly involved in normal cellular protein degradation and turnover. The chain is Cathepsin O (CTSO) from Homo sapiens (Human).